A 239-amino-acid chain; its full sequence is Large ribosomal subunit protein uL2 (239 aa).

Disordered stretches follow at residues 1-21 (MGKS…KSPS) and 203-239 (PFGG…GRRK). Residues 222–239 (PPGRKVGHIAARRTGRRK) are compositionally biased toward basic residues.

It belongs to the universal ribosomal protein uL2 family. Part of the 50S ribosomal subunit. Forms a bridge to the 30S subunit in the 70S ribosome.

In terms of biological role, one of the primary rRNA binding proteins. Required for association of the 30S and 50S subunits to form the 70S ribosome, for tRNA binding and peptide bond formation. It has been suggested to have peptidyltransferase activity; this is somewhat controversial. Makes several contacts with the 16S rRNA in the 70S ribosome. This Pyrococcus furiosus (strain ATCC 43587 / DSM 3638 / JCM 8422 / Vc1) protein is Large ribosomal subunit protein uL2.